Here is a 222-residue protein sequence, read N- to C-terminus: Large ribosomal subunit protein uL4 (222 aa).

The interval 50-72 (TRGRSEVSHSTRKPFRQKGTGNA) is disordered.

It belongs to the universal ribosomal protein uL4 family. Part of the 50S ribosomal subunit.

One of the primary rRNA binding proteins, this protein initially binds near the 5'-end of the 23S rRNA. It is important during the early stages of 50S assembly. It makes multiple contacts with different domains of the 23S rRNA in the assembled 50S subunit and ribosome. Functionally, forms part of the polypeptide exit tunnel. The polypeptide is Large ribosomal subunit protein uL4 (Chlamydia muridarum (strain MoPn / Nigg)).